We begin with the raw amino-acid sequence, 38 residues long: Photosystem II reaction center protein X (38 aa).

A helical transmembrane segment spans residues 8–28 (FLWSLVAGAVVLGALFGAIIF).

The protein belongs to the PsbX family. Type 1 subfamily. In terms of assembly, PSII is composed of 1 copy each of membrane proteins PsbA, PsbB, PsbC, PsbD, PsbE, PsbF, PsbH, PsbI, PsbJ, PsbK, PsbL, PsbM, PsbT, PsbX, PsbY, PsbZ, Psb30/Ycf12, peripheral proteins PsbO, CyanoQ (PsbQ), PsbU, PsbV and a large number of cofactors. It forms dimeric complexes.

It localises to the cellular thylakoid membrane. Involved in the binding and/or turnover of quinones at the Q(B) site of photosystem II (PSII). PSII is a light-driven water plastoquinone oxidoreductase, using light energy to abstract electrons from H(2)O, generating a proton gradient subsequently used for ATP formation. This Synechococcus sp. (strain JA-2-3B'a(2-13)) (Cyanobacteria bacterium Yellowstone B-Prime) protein is Photosystem II reaction center protein X.